A 346-amino-acid polypeptide reads, in one-letter code: MTNKKIKLTQTVKAAGUAAKLGPEGLADALAGLNRPADPRLIVGPETSDDGGVYCLTPEIALIESCDVITPPADAPRAFGRIAAANALSDIYAMGGRPLTAMNLAFFPACSLQPEVLGEVLAGGQDALNEAGCCLVGGHTVEDDELKYGLSVTGTVHPEQVLRNSTARPGDCLLLTKPLGSGILSTAVKGEMATVEQEAEAVAWMSLLNRAAAELMLRYTPSACTDITGFGLIGHSCEMALGSGVTIRLYLDAVPLMQGVTDQVADGMVPAGCYRNRSYYLSRIDAGDCDPERLLPLFDPQTSGGLLIALQPGAAALFQAEAAENSIFCVLIGDVLPRAELPVIVV.

The active site involves U17. A non-standard amino acid (selenocysteine) is located at residue U17. Residues K20 and 47-49 each bind ATP; that span reads TSD. D50 lines the Mg(2+) pocket. Residues D67, D90, and 138–140 each bind ATP; that span reads GHT. D90 is a binding site for Mg(2+). D226 contributes to the Mg(2+) binding site.

The protein belongs to the selenophosphate synthase 1 family. Class I subfamily. In terms of assembly, homodimer. Mg(2+) is required as a cofactor.

It carries out the reaction hydrogenselenide + ATP + H2O = selenophosphate + AMP + phosphate + 2 H(+). Functionally, synthesizes selenophosphate from selenide and ATP. In Trichlorobacter lovleyi (strain ATCC BAA-1151 / DSM 17278 / SZ) (Geobacter lovleyi), this protein is Selenide, water dikinase.